The chain runs to 140 residues: Large ribosomal subunit protein uL11 (140 aa).

It belongs to the universal ribosomal protein uL11 family. Part of the ribosomal stalk of the 50S ribosomal subunit. Interacts with L10 and the large rRNA to form the base of the stalk. L10 forms an elongated spine to which L12 dimers bind in a sequential fashion forming a multimeric L10(L12)X complex. In terms of processing, one or more lysine residues are methylated.

In terms of biological role, forms part of the ribosomal stalk which helps the ribosome interact with GTP-bound translation factors. In Gemmatimonas aurantiaca (strain DSM 14586 / JCM 11422 / NBRC 100505 / T-27), this protein is Large ribosomal subunit protein uL11.